The following is an 842-amino-acid chain: Protein P (842 aa).

Positions 1 to 177 are terminal protein domain (TP); the sequence is MPLSYQHFRR…FCGSPYTWEQ (177 aa). The spacer stretch occupies residues 178-345; the sequence is DLQHGAFLDG…YCLSHLVNLL (168 aa). A disordered region spans residues 184–238; sequence FLDGPSRVGKEPFRQQSSRIPSRSPVGPSIQSKYQQSRLGLQSQKGPLARGQQGR. Positions 197-208 are enriched in low complexity; the sequence is RQQSSRIPSRSP. Positions 212 to 228 are enriched in polar residues; the sequence is SIQSKYQQSRLGLQSQK. The segment at 346-689 is polymerase/reverse transcriptase domain (RT); sequence QDWGPCTEHG…YMNLYPVARQ (344 aa). One can recognise a Reverse transcriptase domain in the interval 356–599; it reads EHHIRIPRTP…YSLNFMGYVI (244 aa). Residues Asp-428, Asp-550, and Asp-551 each coordinate Mg(2+).

The protein belongs to the hepadnaviridae P protein family.

It carries out the reaction DNA(n) + a 2'-deoxyribonucleoside 5'-triphosphate = DNA(n+1) + diphosphate. The enzyme catalyses Endonucleolytic cleavage to 5'-phosphomonoester.. With respect to regulation, activated by host HSP70 and HSP40 in vitro to be able to bind the epsilon loop of the pgRNA. Because deletion of the RNase H region renders the protein partly chaperone-independent, the chaperones may be needed indirectly to relieve occlusion of the RNA-binding site by this domain. Inhibited by several reverse-transcriptase inhibitors: Lamivudine, Adefovir and Entecavir. Functionally, multifunctional enzyme that converts the viral RNA genome into dsDNA in viral cytoplasmic capsids. This enzyme displays a DNA polymerase activity that can copy either DNA or RNA templates, and a ribonuclease H (RNase H) activity that cleaves the RNA strand of RNA-DNA heteroduplexes in a partially processive 3'- to 5'-endonucleasic mode. Neo-synthesized pregenomic RNA (pgRNA) are encapsidated together with the P protein, and reverse-transcribed inside the nucleocapsid. Initiation of reverse-transcription occurs first by binding the epsilon loop on the pgRNA genome, and is initiated by protein priming, thereby the 5'-end of (-)DNA is covalently linked to P protein. Partial (+)DNA is synthesized from the (-)DNA template and generates the relaxed circular DNA (RC-DNA) genome. After budding and infection, the RC-DNA migrates in the nucleus, and is converted into a plasmid-like covalently closed circular DNA (cccDNA). The activity of P protein does not seem to be necessary for cccDNA generation, and is presumably released from (+)DNA by host nuclear DNA repair machinery. In Hepatitis B virus genotype G (isolate IG29227/2000) (HBV-G), this protein is Protein P.